The chain runs to 56 residues: Serine protease inhibitor Kazal-type 1 (56 aa).

Positions 3–56 (LGREAKCNNNAGGCTKIYNPVCGTDGNTYPNECMLCVENQKRQMPVLIQRSGPC) constitute a Kazal-like domain. Intrachain disulfides connect cysteine 9/cysteine 38, cysteine 16/cysteine 35, and cysteine 24/cysteine 56.

It is found in the secreted. Its function is as follows. Serine protease inhibitor which exhibits anti-trypsin activity. In the pancreas, protects against trypsin-catalyzed premature activation of zymogens. Functionally, in the male reproductive tract, binds to sperm heads where it modulates sperm capacitance by inhibiting calcium uptake and nitrogen oxide (NO) production. The polypeptide is Serine protease inhibitor Kazal-type 1 (SPINK1) (Equus caballus (Horse)).